A 168-amino-acid chain; its full sequence is Crossover junction endodeoxyribonuclease RuvC (168 aa).

Residues Asp9, Glu70, and Asp145 contribute to the active site. Mg(2+)-binding residues include Asp9, Glu70, and Asp145.

This sequence belongs to the RuvC family. Homodimer which binds Holliday junction (HJ) DNA. The HJ becomes 2-fold symmetrical on binding to RuvC with unstacked arms; it has a different conformation from HJ DNA in complex with RuvA. In the full resolvosome a probable DNA-RuvA(4)-RuvB(12)-RuvC(2) complex forms which resolves the HJ. Requires Mg(2+) as cofactor.

It is found in the cytoplasm. It catalyses the reaction Endonucleolytic cleavage at a junction such as a reciprocal single-stranded crossover between two homologous DNA duplexes (Holliday junction).. In terms of biological role, the RuvA-RuvB-RuvC complex processes Holliday junction (HJ) DNA during genetic recombination and DNA repair. Endonuclease that resolves HJ intermediates. Cleaves cruciform DNA by making single-stranded nicks across the HJ at symmetrical positions within the homologous arms, yielding a 5'-phosphate and a 3'-hydroxyl group; requires a central core of homology in the junction. The consensus cleavage sequence is 5'-(A/T)TT(C/G)-3'. Cleavage occurs on the 3'-side of the TT dinucleotide at the point of strand exchange. HJ branch migration catalyzed by RuvA-RuvB allows RuvC to scan DNA until it finds its consensus sequence, where it cleaves and resolves the cruciform DNA. In Chlamydia pneumoniae (Chlamydophila pneumoniae), this protein is Crossover junction endodeoxyribonuclease RuvC.